A 323-amino-acid chain; its full sequence is Annexin A3 (323 aa).

Residue Ala2 is modified to N-acetylalanine. Annexin repeat units lie at residues 18 to 89, 90 to 161, 173 to 245, and 249 to 320; these read FSPS…ALVT, APAL…TLAD, HLAK…AIVH, and NTPA…KICG. The residue at position 177 (Lys177) is an N6-acetyllysine. At Thr267 the chain carries Phosphothreonine.

This sequence belongs to the annexin family.

Functionally, inhibitor of phospholipase A2, also possesses anti-coagulant properties. The protein is Annexin A3 (Anxa3) of Mus musculus (Mouse).